A 2345-amino-acid chain; its full sequence is Acetyl-CoA carboxylase 1 (2345 aa).

N-acetylmethionine is present on methionine 1. A phosphoserine mark is found at serine 5, serine 23, serine 25, serine 29, serine 34, serine 47, serine 49, and serine 52. Threonine 57 carries the post-translational modification Phosphothreonine. At serine 77 the chain carries Phosphoserine. Phosphoserine; by AMPK is present on serine 79. The region spanning 116–617 (VIEKVLIANN…DTGWLDRLIA (502 aa)) is the Biotin carboxylation domain. An ATP-grasp domain is found at 274-465 (SKRILNVPQD…LPAAQLQIAM (192 aa)). ATP is bound at residue 314-319 (GGGGKG). The Mg(2+) site is built by glutamate 423, glutamate 436, and asparagine 438. Glutamate 423, glutamate 436, and asparagine 438 together coordinate Mn(2+). Residue arginine 440 is part of the active site. Residue threonine 609 is modified to Phosphothreonine. The 75-residue stretch at 744–818 (FEKENDPSVM…DPGCVIAKMQ (75 aa)) folds into the Biotinyl-binding domain. Lysine 785 carries the post-translational modification N6-biotinyllysine. Residue serine 834 is modified to Phosphoserine. A phosphoserine; by AMPK; in vitro mark is found at serine 1200 and serine 1215. Serine 1217 is subject to Phosphoserine. A Phosphothreonine modification is found at threonine 1226. A phosphoserine mark is found at serine 1258, serine 1262, and serine 1272. Lysine 1333 is modified (N6-acetyllysine). Residues 1575-1913 (PYVTKDLLQS…NVHSSVPLLN (339 aa)) form the CoA carboxyltransferase N-terminal domain. The segment at 1575-2233 (PYVTKDLLQS…EDLVKKKIHS (659 aa)) is carboxyltransferase. CoA-binding residues include arginine 1822, lysine 2126, and arginine 2128. The CoA carboxyltransferase C-terminal domain maps to 1917–2233 (PIDRIIEFVP…EDLVKKKIHS (317 aa)). Phosphothreonine is present on threonine 2152.

In terms of assembly, monomer, homodimer, and homotetramer. Can form filamentous polymers. Interacts in its inactive phosphorylated form with the BRCT domains of BRCA1 which prevents ACACA dephosphorylation and inhibits lipid synthesis. Interacts with MID1IP1; interaction with MID1IP1 promotes oligomerization and increases its activity. Mg(2+) is required as a cofactor. Mn(2+) serves as cofactor. The cofactor is biotin. The N-terminus is blocked. In terms of processing, phosphorylation on Ser-1262 is required for interaction with BRCA1. Post-translationally, phosphorylation at Ser-79 by AMPK inactivates enzyme activity. Phosphorylated in vitro at Ser-1200 and Ser-1215 by AMPK; the relevance of phosphorylation of these sites in vivo is however unclear. The biotin cofactor is covalently attached to the central biotinyl-binding domain and is required for the catalytic activity.

Its subcellular location is the cytoplasm. It localises to the cytosol. The catalysed reaction is hydrogencarbonate + acetyl-CoA + ATP = malonyl-CoA + ADP + phosphate + H(+). The protein operates within lipid metabolism; malonyl-CoA biosynthesis; malonyl-CoA from acetyl-CoA: step 1/1. With respect to regulation, inhibited by phosphorylation. Citrate promotes oligomerization of the protein into filaments that correspond to the most active form of the carboxylase. Its function is as follows. Cytosolic enzyme that catalyzes the carboxylation of acetyl-CoA to malonyl-CoA, the first and rate-limiting step of de novo fatty acid biosynthesis. This is a 2 steps reaction starting with the ATP-dependent carboxylation of the biotin carried by the biotin carboxyl carrier (BCC) domain followed by the transfer of the carboxyl group from carboxylated biotin to acetyl-CoA. This is Acetyl-CoA carboxylase 1 from Rattus norvegicus (Rat).